The primary structure comprises 212 residues: Methylthioribulose-1-phosphate dehydratase (212 aa).

Residues histidine 97 and histidine 99 each coordinate Zn(2+).

This sequence belongs to the aldolase class II family. MtnB subfamily. In terms of assembly, homotetramer. Zn(2+) serves as cofactor.

The enzyme catalyses 5-(methylsulfanyl)-D-ribulose 1-phosphate = 5-methylsulfanyl-2,3-dioxopentyl phosphate + H2O. Its pathway is amino-acid biosynthesis; L-methionine biosynthesis via salvage pathway; L-methionine from S-methyl-5-thio-alpha-D-ribose 1-phosphate: step 2/6. Functionally, catalyzes the dehydration of methylthioribulose-1-phosphate (MTRu-1-P) into 2,3-diketo-5-methylthiopentyl-1-phosphate (DK-MTP-1-P). This Bacillus cereus (strain ZK / E33L) protein is Methylthioribulose-1-phosphate dehydratase.